Here is a 285-residue protein sequence, read N- to C-terminus: Tryptophan synthase alpha chain (285 aa).

Active-site proton acceptor residues include Glu-53 and Asp-64.

The protein belongs to the TrpA family. As to quaternary structure, tetramer of two alpha and two beta chains.

The enzyme catalyses (1S,2R)-1-C-(indol-3-yl)glycerol 3-phosphate + L-serine = D-glyceraldehyde 3-phosphate + L-tryptophan + H2O. The protein operates within amino-acid biosynthesis; L-tryptophan biosynthesis; L-tryptophan from chorismate: step 5/5. Functionally, the alpha subunit is responsible for the aldol cleavage of indoleglycerol phosphate to indole and glyceraldehyde 3-phosphate. This is Tryptophan synthase alpha chain from Bordetella parapertussis (strain 12822 / ATCC BAA-587 / NCTC 13253).